The following is a 548-amino-acid chain: Membrane protein insertase YidC (548 aa).

The helical transmembrane segment at 6-26 threads the bilayer; it reads NLLVIALLFVSFMIWQAWEQD. The interval 28–58 is disordered; it reads NPQPQQQQTTQTTTTAAGSAADQGVPASGQG. Low complexity predominate over residues 29 to 42; it reads PQPQQQQTTQTTTT. The next 4 membrane-spanning stretches (helical) occupy residues 350-370, 420-440, 458-478, and 499-519; these read FLGN…GIMY, LGGC…YYML, LSAQ…MFFI, and PVIF…YYIV.

Belongs to the OXA1/ALB3/YidC family. Type 1 subfamily. Interacts with the Sec translocase complex via SecD. Specifically interacts with transmembrane segments of nascent integral membrane proteins during membrane integration.

Its subcellular location is the cell inner membrane. Its function is as follows. Required for the insertion and/or proper folding and/or complex formation of integral membrane proteins into the membrane. Involved in integration of membrane proteins that insert both dependently and independently of the Sec translocase complex, as well as at least some lipoproteins. Aids folding of multispanning membrane proteins. This Enterobacter sp. (strain 638) protein is Membrane protein insertase YidC.